Here is a 342-residue protein sequence, read N- to C-terminus: Succinylglutamate desuccinylase (342 aa).

Zn(2+) contacts are provided by His63, Glu66, and His155. Residue Glu219 is part of the active site.

The protein belongs to the AspA/AstE family. Succinylglutamate desuccinylase subfamily. Zn(2+) serves as cofactor.

The enzyme catalyses N-succinyl-L-glutamate + H2O = L-glutamate + succinate. It participates in amino-acid degradation; L-arginine degradation via AST pathway; L-glutamate and succinate from L-arginine: step 5/5. Transforms N(2)-succinylglutamate into succinate and glutamate. The sequence is that of Succinylglutamate desuccinylase from Vibrio vulnificus (strain YJ016).